The primary structure comprises 889 residues: DNA mismatch repair protein MutS (889 aa).

641–648 (GPNMAGKS) is an ATP binding site.

Belongs to the DNA mismatch repair MutS family.

In terms of biological role, this protein is involved in the repair of mismatches in DNA. It is possible that it carries out the mismatch recognition step. This protein has a weak ATPase activity. The chain is DNA mismatch repair protein MutS from Orientia tsutsugamushi (strain Ikeda) (Rickettsia tsutsugamushi).